The following is a 1200-amino-acid chain: DNA polymerase subunit gamma-1 (1200 aa).

Disordered stretches follow at residues 471–515 and 667–688; these read QKKT…RPSM and MDLS…SSEH. Basic residues predominate over residues 472 to 481; it reads KKTKISKKQK. Residues 494-512 show a composition bias toward basic and acidic residues; that stretch reads LVEDHNEDPGPPTEKEESR.

This sequence belongs to the DNA polymerase type-A family. As to quaternary structure, heterotrimer composed of a catalytic subunit and a homodimer of accessory subunits. Mg(2+) serves as cofactor.

The protein resides in the mitochondrion. It localises to the mitochondrion matrix. The protein localises to the mitochondrion nucleoid. It carries out the reaction DNA(n) + a 2'-deoxyribonucleoside 5'-triphosphate = DNA(n+1) + diphosphate. Involved in the replication of mitochondrial DNA. Associates with mitochondrial DNA. This Xenopus laevis (African clawed frog) protein is DNA polymerase subunit gamma-1 (polg).